Reading from the N-terminus, the 151-residue chain is UPF0178 protein Pfl01_5469 (151 aa).

This sequence belongs to the UPF0178 family.

The sequence is that of UPF0178 protein Pfl01_5469 from Pseudomonas fluorescens (strain Pf0-1).